The primary structure comprises 632 residues: Extracellular metalloproteinase 5 (632 aa).

An N-terminal signal peptide occupies residues 1–20 (MHGLLLAAGLLSLPLHVLAH). Positions 21–244 (PQPGTSLAGR…HNVVDYVSHA (224 aa)) are excised as a propeptide. The N-linked (GlcNAc...) asparagine glycan is linked to Asn284. His427 provides a ligand contact to Zn(2+). The active site involves Glu428. His431 contacts Zn(2+). N-linked (GlcNAc...) asparagine glycans are attached at residues Asn591 and Asn620.

The protein belongs to the peptidase M36 family. It depends on Zn(2+) as a cofactor.

The protein localises to the secreted. In terms of biological role, secreted metalloproteinase probably acting as a virulence factor. In Arthroderma otae (strain ATCC MYA-4605 / CBS 113480) (Microsporum canis), this protein is Extracellular metalloproteinase 5 (MEP5).